Here is a 406-residue protein sequence, read N- to C-terminus: Angiopoietin-related protein 4 (406 aa).

Positions 1-25 (MSGAPTAGAALMLCAATAVLLSAQG) are cleaved as a signal peptide. Residues 100 to 143 (EVLHSLQTQLKAQNSRIQQLFHKVAQQQRHLEKQHLRIQHLQSQ) adopt a coiled-coil conformation. Asparagine 177 carries N-linked (GlcNAc...) asparagine glycosylation. The region spanning 179 to 401 (SRLHRLPRDC…ATTMLIQPMA (223 aa)) is the Fibrinogen C-terminal domain. Intrachain disulfides connect cysteine 188/cysteine 216 and cysteine 341/cysteine 354.

In terms of assembly, homooligomer; disulfide-linked via Cys residues in the N-terminal part of the protein. The homooligomer undergoes proteolytic processing to release the ANGPTL4 C-terminal chain, which circulates as a monomer. The homooligomer unprocessed form is able to interact with the extracellular matrix. In terms of processing, N-glycosylated. Post-translationally, forms disulfide-linked dimers and tetramers. Cleaved into a smaller N-terminal chain and a larger chain that contains the fibrinogen C-terminal domain; both cleaved and uncleaved forms are detected in the extracellular space. The cleaved form is not present within the cell. As to expression, detected in blood plasma (at protein level). Detected in liver. Detected in white fat tissue and placenta. Expressed at high levels in the placenta, heart, liver, muscle, pancreas and lung but expressed poorly in the brain and kidney.

It is found in the secreted. The protein resides in the extracellular space. It localises to the extracellular matrix. In terms of biological role, mediates inactivation of the lipoprotein lipase LPL, and thereby plays a role in the regulation of triglyceride clearance from the blood serum and in lipid metabolism. May also play a role in regulating glucose homeostasis and insulin sensitivity. Inhibits proliferation, migration, and tubule formation of endothelial cells and reduces vascular leakage. Upon heterologous expression, inhibits the adhesion of endothelial cell to the extracellular matrix (ECM), and inhibits the reorganization of the actin cytoskeleton, formation of actin stress fibers and focal adhesions in endothelial cells that have adhered to ANGPTL4-containing ECM (in vitro). Depending on context, may modulate tumor-related angiogenesis. Its function is as follows. Mediates inactivation of the lipoprotein lipase LPL, and thereby plays an important role in the regulation of triglyceride clearance from the blood serum and in lipid metabolism. Has higher activity in LPL inactivation than the uncleaved protein. The sequence is that of Angiopoietin-related protein 4 (ANGPTL4) from Homo sapiens (Human).